Reading from the N-terminus, the 328-residue chain is UPF0421 protein SAV1889 (328 aa).

The next 4 helical transmembrane spans lie at 19–39, 61–81, 108–128, and 132–152; these read IAIF…IYAI, LPAT…FGDQ, VAVL…IFNF, and TLTA…VFPP.

It belongs to the UPF0421 family.

Its subcellular location is the cell membrane. The sequence is that of UPF0421 protein SAV1889 from Staphylococcus aureus (strain Mu50 / ATCC 700699).